The following is a 374-amino-acid chain: Chaperone protein DnaJ (374 aa).

Residues D4–G68 form the J domain. The CR-type zinc finger occupies G133–T215. The Zn(2+) site is built by C146, C149, C163, C166, C189, C192, C203, and C206. CXXCXGXG motif repeat units follow at residues C146–G153, C163–G170, C189–G196, and C203–G210.

It belongs to the DnaJ family. In terms of assembly, homodimer. Zn(2+) serves as cofactor.

It localises to the cytoplasm. Participates actively in the response to hyperosmotic and heat shock by preventing the aggregation of stress-denatured proteins and by disaggregating proteins, also in an autonomous, DnaK-independent fashion. Unfolded proteins bind initially to DnaJ; upon interaction with the DnaJ-bound protein, DnaK hydrolyzes its bound ATP, resulting in the formation of a stable complex. GrpE releases ADP from DnaK; ATP binding to DnaK triggers the release of the substrate protein, thus completing the reaction cycle. Several rounds of ATP-dependent interactions between DnaJ, DnaK and GrpE are required for fully efficient folding. Also involved, together with DnaK and GrpE, in the DNA replication of plasmids through activation of initiation proteins. This is Chaperone protein DnaJ from Cyanothece sp. (strain PCC 7425 / ATCC 29141).